The primary structure comprises 380 residues: Cytochrome b (380 aa).

4 consecutive transmembrane segments (helical) span residues 34–54 (FGSLLALCLMTQILTGLLLAM), 78–99 (WLIRNMHANGASFFFICIYLHI), 114–134 (WNTGVLLLLTLMATAFVGYVL), and 179–199 (FFALHFLLPFMIAGLTLIHLT). The heme b site is built by H84 and H98. 2 residues coordinate heme b: H183 and H197. A ubiquinone is bound at residue H202. 4 helical membrane-spanning segments follow: residues 227–247 (LKDILGLALLLLPLTTMALFS), 289–309 (LGGVLALAASVLVLFLSPLLH), 321–341 (LSQLLFWALVANLLILTWIGS), and 348–368 (FIIIGQLASTTYFIILLILFP).

This sequence belongs to the cytochrome b family. As to quaternary structure, the cytochrome bc1 complex contains 11 subunits: 3 respiratory subunits (MT-CYB, CYC1 and UQCRFS1), 2 core proteins (UQCRC1 and UQCRC2) and 6 low-molecular weight proteins (UQCRH/QCR6, UQCRB/QCR7, UQCRQ/QCR8, UQCR10/QCR9, UQCR11/QCR10 and a cleavage product of UQCRFS1). This cytochrome bc1 complex then forms a dimer. Heme b serves as cofactor.

Its subcellular location is the mitochondrion inner membrane. Functionally, component of the ubiquinol-cytochrome c reductase complex (complex III or cytochrome b-c1 complex) that is part of the mitochondrial respiratory chain. The b-c1 complex mediates electron transfer from ubiquinol to cytochrome c. Contributes to the generation of a proton gradient across the mitochondrial membrane that is then used for ATP synthesis. This chain is Cytochrome b (MT-CYB), found in Oceanodroma microsoma (Least storm petrel).